Reading from the N-terminus, the 122-residue chain is Large ribosomal subunit protein uL14 (122 aa).

The protein belongs to the universal ribosomal protein uL14 family. Part of the 50S ribosomal subunit. Forms a cluster with proteins L3 and L19. In the 70S ribosome, L14 and L19 interact and together make contacts with the 16S rRNA in bridges B5 and B8.

Functionally, binds to 23S rRNA. Forms part of two intersubunit bridges in the 70S ribosome. The chain is Large ribosomal subunit protein uL14 from Clostridium botulinum (strain 657 / Type Ba4).